Consider the following 80-residue polypeptide: uncharacterized protein (80 aa).

The chain crosses the membrane as a helical span at residues 12–32; that stretch reads FKIIALILLIVLIINLSYKLF.

Its subcellular location is the membrane. This is an uncharacterized protein from Saccharomyces cerevisiae (strain ATCC 204508 / S288c) (Baker's yeast).